We begin with the raw amino-acid sequence, 341 residues long: Endoglucanase 1 (341 aa).

A signal peptide spans 1 to 16 (MKTATLLAALSVLAGA). Residues 17-30 (LAAPLAGDSALHRR) constitute a propeptide that is removed on maturation. Glu166 (proton donor) is an active-site residue. Glu275 (nucleophile) is an active-site residue.

This sequence belongs to the glycosyl hydrolase 5 (cellulase A) family.

It catalyses the reaction Endohydrolysis of (1-&gt;4)-beta-D-glucosidic linkages in cellulose, lichenin and cereal beta-D-glucans.. Its function is as follows. Has endoglucanase activity on carboxymethyl-cellulose (CMC). In Saitozyma flava (Cryptococcus flavus), this protein is Endoglucanase 1 (CMC1).